Reading from the N-terminus, the 71-residue chain is Peptide Ctri10261 (71 aa).

The first 23 residues, 1–23, serve as a signal peptide directing secretion; the sequence is MKIPLILVTIAIILLMVPTESDA. Phenylalanine 37 carries the phenylalanine amide modification. A propeptide spanning residues 41–71 is cleaved from the precursor; sequence SLKNRDYFDYMQDPSLSNADLRELEELLEDY.

Belongs to the non-disulfide-bridged peptide (NDBP) superfamily. Short antimicrobial peptide (group 4) family. Expressed by the venom gland.

Its subcellular location is the secreted. Functionally, antimicrobial peptide. This is Peptide Ctri10261 from Chaerilus tricostatus (Scorpion).